A 427-amino-acid chain; its full sequence is Trigger factor (427 aa).

Residues 163 to 248 form the PPIase FKBP-type domain; sequence GDTVVIDFVG…IHEVKAKEVP (86 aa).

Belongs to the FKBP-type PPIase family. Tig subfamily.

The protein localises to the cytoplasm. The catalysed reaction is [protein]-peptidylproline (omega=180) = [protein]-peptidylproline (omega=0). Its function is as follows. Involved in protein export. Acts as a chaperone by maintaining the newly synthesized protein in an open conformation. Functions as a peptidyl-prolyl cis-trans isomerase. The chain is Trigger factor from Streptococcus suis (strain 05ZYH33).